The primary structure comprises 475 residues: Ataxin-10 (475 aa).

Position 10 is an omega-N-methylarginine (Arg-10). Phosphoserine occurs at positions 12 and 77. At Thr-82 the chain carries Phosphothreonine. Position 430 is a phosphoserine (Ser-430).

It belongs to the ataxin-10 family. As to quaternary structure, homooligomer. Interacts with GNB2. Interacts with IQCB1. Interacts with OGT. Polyubiquitinated. In terms of processing, phosphorylation at Ser-12 by AURKB promotes the association of ATXN10 with PLK1. Phosphorylation at Ser-77 and Thr-82 by PLK1 may play a role in the regulation of cytokinesis and may stimulate the proteasome-mediated degradation of ATXN10. As to expression, ubiquitous distribution. Markedly increased expression in testis, adrenals, and brain.

Its subcellular location is the cytoplasm. The protein resides in the perinuclear region. It localises to the midbody. The protein localises to the cytoskeleton. It is found in the cilium basal body. Its subcellular location is the microtubule organizing center. The protein resides in the centrosome. It localises to the centriole. Its function is as follows. May play a role in the regulation of cytokinesis. May play a role in signaling by stimulating protein glycosylation. Induces neuritogenesis by activating the Ras-MAP kinase pathway and is necessary for the survival of cerebellar neurons. Does not appear to play a major role in ciliogenesis. The protein is Ataxin-10 (Atxn10) of Rattus norvegicus (Rat).